Reading from the N-terminus, the 302-residue chain is Troponin T, cardiac muscle isoforms (302 aa).

A compositionally biased stretch (acidic residues) spans 1–55 (MSDSEEVVEEYEQEQEEEYVEEEEEEWLEEDDGQEDQVDEEEEETEETTAEEQED). Disordered stretches follow at residues 1-99 (MSDS…GERL), 138-230 (KDRI…RKPL), and 280-302 (SDHQKVKGSKAARGKTMVGGRWK). Ser2 carries the N-acetylserine modification. Position 2 is a phosphoserine; by CK2 (Ser2). Basic and acidic residues predominate over residues 65 to 79 (EGDREQEPGEGESKP). Pro residues predominate over residues 82–93 (KPFMPNLVPPKI). 2 stretches are compositionally biased toward basic and acidic residues: residues 138–186 (KDRI…EKEA) and 204–230 (KSEKKGGKKQTEREKKKKILSERRKPL).

This sequence belongs to the troponin T family.

Troponin T is the tropomyosin-binding subunit of troponin, the thin filament regulatory complex which confers calcium-sensitivity to striated muscle actomyosin ATPase activity. The polypeptide is Troponin T, cardiac muscle isoforms (TNNT2) (Gallus gallus (Chicken)).